Reading from the N-terminus, the 635-residue chain is Threonine--tRNA ligase (635 aa).

In terms of domain architecture, TGS spans 1–58 (MIQVTCDQKNYEVLEGTTAAELAKQLKNSHQFIGVLINERPRDLSTHLNEGDTLVFLT). Residues 237-528 (DHRVLGAKLD…LIENFKGRFP (292 aa)) are catalytic. The Zn(2+) site is built by C328, H379, and H505.

The protein belongs to the class-II aminoacyl-tRNA synthetase family. In terms of assembly, homodimer. The cofactor is Zn(2+).

The protein resides in the cytoplasm. It carries out the reaction tRNA(Thr) + L-threonine + ATP = L-threonyl-tRNA(Thr) + AMP + diphosphate + H(+). Functionally, catalyzes the attachment of threonine to tRNA(Thr) in a two-step reaction: L-threonine is first activated by ATP to form Thr-AMP and then transferred to the acceptor end of tRNA(Thr). Also edits incorrectly charged L-seryl-tRNA(Thr). In Chlamydia pneumoniae (Chlamydophila pneumoniae), this protein is Threonine--tRNA ligase.